An 819-amino-acid chain; its full sequence is DNA mismatch repair protein MutS (819 aa).

Position 596 to 603 (596 to 603 (GPNMSGKS)) interacts with ATP.

Belongs to the DNA mismatch repair MutS family.

In terms of biological role, this protein is involved in the repair of mismatches in DNA. It is possible that it carries out the mismatch recognition step. This protein has a weak ATPase activity. The protein is DNA mismatch repair protein MutS of Thermosipho melanesiensis (strain DSM 12029 / CIP 104789 / BI429).